A 408-amino-acid chain; its full sequence is Dual-specificity RNA methyltransferase RlmN (408 aa).

E93 acts as the Proton acceptor in catalysis. Residues 99 to 379 (ETNRGTLCIS…TTTRKTRGDD (281 aa)) form the Radical SAM core domain. A disulfide bridge connects residues C106 and C384. Residues C113, C117, and C120 each coordinate [4Fe-4S] cluster. The tract at residues 152–196 (SPAGSKDGDGGPDHASRATKLDHRAADAKGVQSDSWRSSDPEEDH) is disordered. Residues 157–178 (KDGDGGPDHASRATKLDHRAAD) show a composition bias toward basic and acidic residues. Residues 210–211 (GE), S242, 264–266 (SLH), and N341 each bind S-adenosyl-L-methionine. The active-site S-methylcysteine intermediate is the C384.

It belongs to the radical SAM superfamily. RlmN family. The cofactor is [4Fe-4S] cluster.

The protein localises to the cytoplasm. It catalyses the reaction adenosine(2503) in 23S rRNA + 2 reduced [2Fe-2S]-[ferredoxin] + 2 S-adenosyl-L-methionine = 2-methyladenosine(2503) in 23S rRNA + 5'-deoxyadenosine + L-methionine + 2 oxidized [2Fe-2S]-[ferredoxin] + S-adenosyl-L-homocysteine. The enzyme catalyses adenosine(37) in tRNA + 2 reduced [2Fe-2S]-[ferredoxin] + 2 S-adenosyl-L-methionine = 2-methyladenosine(37) in tRNA + 5'-deoxyadenosine + L-methionine + 2 oxidized [2Fe-2S]-[ferredoxin] + S-adenosyl-L-homocysteine. Its function is as follows. Specifically methylates position 2 of adenine 2503 in 23S rRNA and position 2 of adenine 37 in tRNAs. m2A2503 modification seems to play a crucial role in the proofreading step occurring at the peptidyl transferase center and thus would serve to optimize ribosomal fidelity. The chain is Dual-specificity RNA methyltransferase RlmN from Aromatoleum aromaticum (strain DSM 19018 / LMG 30748 / EbN1) (Azoarcus sp. (strain EbN1)).